The primary structure comprises 284 residues: MFKKFKPVTPGTRQLVLPAFDELTRQGDLTGKRTRKSVRPNKKLSFFKKSSGGRDNLGHISCRHRGGGAKRLYRVIDFKRNKDGIEAKVVSVEYDPNRSAYIALLNYADGEKRYILAPKGIKRGDQVISGEGSPFKLGCCMTLKSMPLGSTVHNIEMRPHSGGKLVRSAGLAAQVIAKTPGYVTLKMPSGEFRMLNEGCRATIGEVSNADHNLCVDGKAGRKRWKGVRPTVRGTAMNPVDHPHGGGEGRHNGYIPRTPWGKVTKGLKTRDKRKSNKWIVKDRRK.

The interval 232–284 is disordered; sequence RGTAMNPVDHPHGGGEGRHNGYIPRTPWGKVTKGLKTRDKRKSNKWIVKDRRK. Residues 240 to 250 are compositionally biased toward basic and acidic residues; sequence DHPHGGGEGRH. Positions 264 to 284 are enriched in basic residues; it reads KGLKTRDKRKSNKWIVKDRRK.

It belongs to the universal ribosomal protein uL2 family. In terms of assembly, part of the 50S ribosomal subunit. Forms a bridge to the 30S subunit in the 70S ribosome.

One of the primary rRNA binding proteins. Required for association of the 30S and 50S subunits to form the 70S ribosome, for tRNA binding and peptide bond formation. It has been suggested to have peptidyltransferase activity; this is somewhat controversial. Makes several contacts with the 16S rRNA in the 70S ribosome. The polypeptide is Large ribosomal subunit protein uL2 (Chlamydia felis (strain Fe/C-56) (Chlamydophila felis)).